The chain runs to 264 residues: Thymidylate synthase (264 aa).

Arg21 contacts dUMP. His51 contributes to the (6R)-5,10-methylene-5,6,7,8-tetrahydrofolate binding site. 126–127 is a dUMP binding site; sequence RR. The active-site Nucleophile is Cys146. DUMP-binding positions include 166-169, Asn177, and 207-209; these read RSVD and HLY. Position 169 (Asp169) interacts with (6R)-5,10-methylene-5,6,7,8-tetrahydrofolate. Ser263 is a binding site for (6R)-5,10-methylene-5,6,7,8-tetrahydrofolate.

The protein belongs to the thymidylate synthase family. Bacterial-type ThyA subfamily. In terms of assembly, homodimer.

It localises to the cytoplasm. The catalysed reaction is dUMP + (6R)-5,10-methylene-5,6,7,8-tetrahydrofolate = 7,8-dihydrofolate + dTMP. It participates in pyrimidine metabolism; dTTP biosynthesis. Functionally, catalyzes the reductive methylation of 2'-deoxyuridine-5'-monophosphate (dUMP) to 2'-deoxythymidine-5'-monophosphate (dTMP) while utilizing 5,10-methylenetetrahydrofolate (mTHF) as the methyl donor and reductant in the reaction, yielding dihydrofolate (DHF) as a by-product. This enzymatic reaction provides an intracellular de novo source of dTMP, an essential precursor for DNA biosynthesis. The sequence is that of Thymidylate synthase from Anoxybacillus flavithermus (strain DSM 21510 / WK1).